The primary structure comprises 212 residues: 3-isopropylmalate dehydratase small subunit (212 aa).

The protein belongs to the LeuD family. LeuD type 1 subfamily. Heterodimer of LeuC and LeuD.

The enzyme catalyses (2R,3S)-3-isopropylmalate = (2S)-2-isopropylmalate. It participates in amino-acid biosynthesis; L-leucine biosynthesis; L-leucine from 3-methyl-2-oxobutanoate: step 2/4. Catalyzes the isomerization between 2-isopropylmalate and 3-isopropylmalate, via the formation of 2-isopropylmaleate. The chain is 3-isopropylmalate dehydratase small subunit from Beutenbergia cavernae (strain ATCC BAA-8 / DSM 12333 / CCUG 43141 / JCM 11478 / NBRC 16432 / NCIMB 13614 / HKI 0122).